Reading from the N-terminus, the 179-residue chain is Protein Syd (179 aa).

This sequence belongs to the Syd family.

The protein resides in the cell inner membrane. Interacts with the SecY protein in vivo. May bind preferentially to an uncomplexed state of SecY, thus functioning either as a chelating agent for excess SecY in the cell or as a regulatory factor that negatively controls the translocase function. In Pseudoalteromonas translucida (strain TAC 125), this protein is Protein Syd.